Here is a 436-residue protein sequence, read N- to C-terminus: GTPase Der (436 aa).

EngA-type G domains lie at 4–167 (PTVA…PVEE) and 175–351 (IRFS…ESQN). Residues 10–17 (GRPNVGKS), 57–61 (DTGGI), 119–122 (NKVD), 181–188 (GRPNVGKS), 229–233 (DTAGM), and 294–297 (NKWD) each bind GTP. In terms of domain architecture, KH-like spans 352 to 436 (KRIPSAVLND…PIHLIARKRK (85 aa)).

Belongs to the TRAFAC class TrmE-Era-EngA-EngB-Septin-like GTPase superfamily. EngA (Der) GTPase family. In terms of assembly, associates with the 50S ribosomal subunit.

In terms of biological role, GTPase that plays an essential role in the late steps of ribosome biogenesis. The chain is GTPase Der from Streptococcus pyogenes serotype M2 (strain MGAS10270).